We begin with the raw amino-acid sequence, 245 residues long: Probable phosphatase YcdX (245 aa).

H7, H9, H15, H40, E73, H101, H131, D192, and H194 together coordinate Zn(2+).

Belongs to the PHP family. Homotrimer. Zn(2+) is required as a cofactor.

This is Probable phosphatase YcdX from Escherichia coli O127:H6 (strain E2348/69 / EPEC).